The following is a 379-amino-acid chain: Queuine tRNA-ribosyltransferase (379 aa).

The Proton acceptor role is filled by aspartate 94. Substrate contacts are provided by residues aspartate 94–phenylalanine 98, aspartate 148, glutamine 191, and glycine 218. The RNA binding stretch occupies residues glycine 249–alanine 255. Catalysis depends on aspartate 268, which acts as the Nucleophile. An RNA binding; important for wobble base 34 recognition region spans residues threonine 273–arginine 277. Zn(2+) contacts are provided by cysteine 306, cysteine 308, cysteine 311, and histidine 337.

Belongs to the queuine tRNA-ribosyltransferase family. Homodimer. Within each dimer, one monomer is responsible for RNA recognition and catalysis, while the other monomer binds to the replacement base PreQ1. Requires Zn(2+) as cofactor.

It catalyses the reaction 7-aminomethyl-7-carbaguanine + guanosine(34) in tRNA = 7-aminomethyl-7-carbaguanosine(34) in tRNA + guanine. The protein operates within tRNA modification; tRNA-queuosine biosynthesis. Its function is as follows. Catalyzes the base-exchange of a guanine (G) residue with the queuine precursor 7-aminomethyl-7-deazaguanine (PreQ1) at position 34 (anticodon wobble position) in tRNAs with GU(N) anticodons (tRNA-Asp, -Asn, -His and -Tyr). Catalysis occurs through a double-displacement mechanism. The nucleophile active site attacks the C1' of nucleotide 34 to detach the guanine base from the RNA, forming a covalent enzyme-RNA intermediate. The proton acceptor active site deprotonates the incoming PreQ1, allowing a nucleophilic attack on the C1' of the ribose to form the product. After dissociation, two additional enzymatic reactions on the tRNA convert PreQ1 to queuine (Q), resulting in the hypermodified nucleoside queuosine (7-(((4,5-cis-dihydroxy-2-cyclopenten-1-yl)amino)methyl)-7-deazaguanosine). This Staphylococcus aureus (strain Mu3 / ATCC 700698) protein is Queuine tRNA-ribosyltransferase.